Consider the following 423-residue polypeptide: Progestin and adipoQ receptor-like protein 1 (423 aa).

At M1–T201 the chain is on the cytoplasmic side. The tract at residues V54–K140 is disordered. Acidic residues predominate over residues S60 to S69. Residues T104–G114 show a composition bias toward basic residues. A helical transmembrane segment spans residues G202–L222. The Extracellular segment spans residues T223–K234. A helical membrane pass occupies residues V235–S252. Residues P253–K288 are Cytoplasmic-facing. Residues I289–D309 form a helical membrane-spanning segment. Over K310–R320 the chain is Extracellular. A helical membrane pass occupies residues A321–T341. Topologically, residues D342–N351 are cytoplasmic. A helical membrane pass occupies residues S352–T372. Residues R373 to L392 are Extracellular-facing. A helical membrane pass occupies residues F393–F413. Residues A414 to R423 lie on the Cytoplasmic side of the membrane.

This sequence belongs to the ADIPOR family.

The protein localises to the membrane. Its function is as follows. Probable receptor, which may be involved in metabolic pathways that regulate lipid metabolism such as fatty acid oxidation. The chain is Progestin and adipoQ receptor-like protein 1 from Caenorhabditis briggsae.